Reading from the N-terminus, the 137-residue chain is Small ribosomal subunit protein uS9 (137 aa).

The span at 105 to 117 (LKVEGYLTRDPRA) shows a compositional bias: basic and acidic residues. The tract at residues 105–137 (LKVEGYLTRDPRAKERKKYGLRKARKAPQYSKR) is disordered. Residues 118-137 (KERKKYGLRKARKAPQYSKR) are compositionally biased toward basic residues.

This sequence belongs to the universal ribosomal protein uS9 family.

This chain is Small ribosomal subunit protein uS9, found in Cyanothece sp. (strain PCC 7425 / ATCC 29141).